Here is a 294-residue protein sequence, read N- to C-terminus: NAD kinase (294 aa).

The active-site Proton acceptor is Asp74. NAD(+)-binding positions include 74-75, 148-149, His159, Arg176, Asp178, 189-194, and Gln249; these read DG, NE, and TAYSLS.

It belongs to the NAD kinase family. Requires a divalent metal cation as cofactor.

It is found in the cytoplasm. It carries out the reaction NAD(+) + ATP = ADP + NADP(+) + H(+). In terms of biological role, involved in the regulation of the intracellular balance of NAD and NADP, and is a key enzyme in the biosynthesis of NADP. Catalyzes specifically the phosphorylation on 2'-hydroxyl of the adenosine moiety of NAD to yield NADP. The chain is NAD kinase from Vibrio atlanticus (strain LGP32) (Vibrio splendidus (strain Mel32)).